The sequence spans 82 residues: Penaeidin-3d (82 aa).

An N-terminal signal peptide occupies residues 1-19 (MRLVVCLVFLASFALVCQG). Gln20 carries the pyrrolidone carboxylic acid modification. 3 disulfide bridges follow: Cys51/Cys66, Cys55/Cys73, and Cys67/Cys74. Ser81 carries the post-translational modification Serine amide.

Belongs to the penaeidin family.

The protein resides in the cytoplasmic granule. Antibacterial and antifungal activity. Presents chitin-binding activity. In Penaeus vannamei (Whiteleg shrimp), this protein is Penaeidin-3d.